A 90-amino-acid polypeptide reads, in one-letter code: Bombyxin B-7 (90 aa).

The first 20 residues, 1 to 20 (MMKTSVMLMLVVVISLMCSG), serve as a signal peptide directing secretion. Cystine bridges form between C30-C76, C42-C89, and C75-C80. Positions 49 to 67 (GGAQYAPYFWTRQYLGSRG) are cleaved as a propeptide — c peptide like.

The protein belongs to the insulin family. As to quaternary structure, heterodimer of a B chain and an A chain linked by two disulfide bonds.

The protein localises to the secreted. Its function is as follows. Brain peptide responsible for activation of prothoracic glands to produce ecdysone in insects. In Bombyx mori (Silk moth), this protein is Bombyxin B-7 (BBXB7).